Reading from the N-terminus, the 710-residue chain is MGMSKSRGCFGYPLSIFFIVVNEFCERFSYYGMRALLVLYFRNFLGWDDDLSTAIYHTFVALCYLTPILGALIADSWLGKFKTIVSLSIVYTIGQAVISVSSINDLTDHDHDGSPNNLPLHVALSMIGLALIALGTGGIKPCVSAFGGDQFEEGQEKQRNRFFSIFYLAINAGSLLSTIITPILRVQQCGIHSQQACYPLAFGVPAALMAVALIVFVLGSGMYKKFQPQGNIMGKVAKCIRFAIKNRFRHRSKAFPKRNHWLDWAKEKYDERLISQIKIMTKVMFLYIPLPMFWALFDQQGSRWTLQATTMTGKIGTIEIQPDQMQTVNAILIVIMVPIVDAVVYPLIAKCGFNFTSLKKMTVGMFLASMAFVVAAIVQVEIDKTLPVFPSGNQVQIKVLNIGNNDMAVYFPGKNVTVAQMSQTDTFMTFDVDQLTSINVSSPGSPGVTTVAHEFEPGHRHTLLVWGPNLYRVVKDGLNQKPEKGENGIRFVSTLNEMITIKMSGKVYENVTSHSASNYQFFPSGQKDYTINTTEIAPNCSSDFKSSNLDFGSAYTYVIRSRASDGCLEVKEFEDIPPNTVNMALQIPQYFLLTCGEVVFSVTGLEFSYSQAPSNMKSVLQAGWLLTVAIGNIIVLIVAEAGHFDKQWAEYVLFASLLLVVCIIFAIMARFYTYINPAEIEAQFDEDEKKKGVGKENPYSSLEPVSQTNM.

A helical membrane pass occupies residues 1-21 (MGMSKSRGCFGYPLSIFFIVV). Residues 22–53 (NEFCERFSYYGMRALLVLYFRNFLGWDDDLST) lie on the Extracellular side of the membrane. Residues 54–74 (AIYHTFVALCYLTPILGALIA) form a helical membrane-spanning segment. The Cytoplasmic segment spans residues 75 to 82 (DSWLGKFK). A helical membrane pass occupies residues 83–103 (TIVSLSIVYTIGQAVISVSSI). Residues 104-118 (NDLTDHDHDGSPNNL) are Extracellular-facing. The helical transmembrane segment at 119 to 139 (PLHVALSMIGLALIALGTGGI) threads the bilayer. The Cytoplasmic portion of the chain corresponds to 140 to 161 (KPCVSAFGGDQFEEGQEKQRNR). A helical transmembrane segment spans residues 162–182 (FFSIFYLAINAGSLLSTIITP). The Extracellular segment spans residues 183 to 198 (ILRVQQCGIHSQQACY). Residues 199 to 219 (PLAFGVPAALMAVALIVFVLG) traverse the membrane as a helical segment. The Cytoplasmic segment spans residues 220–276 (SGMYKKFQPQGNIMGKVAKCIRFAIKNRFRHRSKAFPKRNHWLDWAKEKYDERLISQ). The helical transmembrane segment at 277-297 (IKIMTKVMFLYIPLPMFWALF) threads the bilayer. Residues 298 to 327 (DQQGSRWTLQATTMTGKIGTIEIQPDQMQT) lie on the Extracellular side of the membrane. The helical transmembrane segment at 328 to 348 (VNAILIVIMVPIVDAVVYPLI) threads the bilayer. The Cytoplasmic segment spans residues 349–361 (AKCGFNFTSLKKM). Residues 362-382 (TVGMFLASMAFVVAAIVQVEI) traverse the membrane as a helical segment. Residues 383 to 586 (DKTLPVFPSG…PPNTVNMALQ (204 aa)) are Extracellular-facing. The extracellular domain (ECD) stretch occupies residues 383–586 (DKTLPVFPSG…PPNTVNMALQ (204 aa)). Residues Asn415, Asn439, Asn510, Asn532, and Asn539 are each glycosylated (N-linked (GlcNAc...) asparagine). The chain crosses the membrane as a helical span at residues 587–607 (IPQYFLLTCGEVVFSVTGLEF). Residues 608 to 621 (SYSQAPSNMKSVLQ) are Cytoplasmic-facing. Residues 622–642 (AGWLLTVAIGNIIVLIVAEAG) form a helical membrane-spanning segment. Residues 643-647 (HFDKQ) are Extracellular-facing. Residues 648 to 668 (WAEYVLFASLLLVVCIIFAIM) traverse the membrane as a helical segment. Residues 669 to 710 (ARFYTYINPAEIEAQFDEDEKKKGVGKENPYSSLEPVSQTNM) lie on the Cytoplasmic side of the membrane. Residues 687–710 (DEKKKGVGKENPYSSLEPVSQTNM) form a disordered region. Residues 698–710 (PYSSLEPVSQTNM) show a composition bias toward polar residues.

Belongs to the major facilitator superfamily. Proton-dependent oligopeptide transporter (POT/PTR) (TC 2.A.17) family. Interacts (via extracellular domain region) with trypsin. Highly expressed in small intestine. As to expression, expression is restricted to pinealocytes.

The protein resides in the apical cell membrane. The catalysed reaction is a dipeptide(out) + H(+)(out) = a dipeptide(in) + H(+)(in). It catalyses the reaction an L-amino acid tripeptide(out) + H(+)(out) = an L-amino acid tripeptide(in) + H(+)(in). It carries out the reaction L-alanyl-L-lysine(out) + H(+)(out) = L-alanyl-L-lysine(in) + H(+)(in). The enzyme catalyses L-alanyl-L-proline(out) + H(+)(out) = L-alanyl-L-proline(in) + H(+)(in). The catalysed reaction is L-alanyl-L-valine(out) + H(+)(out) = L-alanyl-L-valine(in) + H(+)(in). It catalyses the reaction carnosine(out) + H(+)(out) = carnosine(in) + H(+)(in). It carries out the reaction glycyl-L-glutamine(out) + H(+)(out) = glycyl-L-glutamine(in) + H(+)(in). The enzyme catalyses glycyl-L-leucine(out) + H(+)(out) = glycyl-L-leucine(in) + H(+)(in). The catalysed reaction is glycyl-L-proline(out) + H(+)(out) = glycyl-L-proline(in) + H(+)(in). It catalyses the reaction glycyl-sarcosine(out) + H(+)(out) = glycyl-sarcosine(in) + H(+)(in). It carries out the reaction L-leucyl-L-leucine(out) + H(+)(out) = L-leucyl-L-leucine(in) + H(+)(in). The enzyme catalyses L-leucyl-L-proline(out) + H(+)(out) = L-leucyl-L-proline(in) + H(+)(in). The catalysed reaction is L-phenylalanyl-L-leucine(out) + H(+)(out) = L-phenylalanyl-L-leucine(in) + H(+)(in). It catalyses the reaction L-phenylalanyl-L-phenylalanine(out) + H(+)(out) = L-phenylalanyl-L-phenylalanine(in) + H(+)(in). It carries out the reaction L-lysyl-glycine(out) + H(+)(out) = L-lysyl-glycine(in) + H(+)(in). The enzyme catalyses L-tyrosylglycine(out) + H(+)(out) = L-tyrosylglycine(in) + H(+)(in). The catalysed reaction is L-alanyl-L-aspartate(out) + 2 H(+)(out) = L-alanyl-L-aspartate(in) + 2 H(+)(in). It catalyses the reaction L-aspartyl-glycine(out) + 2 H(+)(out) = L-aspartyl-glycine(in) + 2 H(+)(in). It carries out the reaction glycyl-L-aspartate(out) + 2 H(+)(out) = glycyl-L-aspartate(in) + 2 H(+)(in). The enzyme catalyses glycyl-L-glutamate(out) + 2 H(+)(out) = glycyl-L-glutamate(in) + 2 H(+)(in). The catalysed reaction is L-alanyl-L-leucyl-L-alanine(out) + H(+)(out) = L-alanyl-L-leucyl-L-alanine(in) + H(+)(in). It catalyses the reaction L-alanyl-L-prolylglycine(out) + H(+)(out) = L-alanyl-L-prolylglycine(in) + H(+)(in). It carries out the reaction glycylglycyl-L-isoleucine(out) + H(+)(out) = glycylglycyl-L-isoleucine(in) + H(+)(in). The enzyme catalyses glycylglycyl-L-proline(out) + H(+)(out) = glycylglycyl-L-proline(in) + H(+)(in). The catalysed reaction is L-methionyl-L-phenylalanyl-L-methionine(out) + H(+)(out) = L-methionyl-L-phenylalanyl-L-methionine(in) + H(+)(in). It catalyses the reaction N-acetyl-D-muramoyl-L-alanyl-D-isoglutamine(out) + 2 H(+)(out) = N-acetyl-D-muramoyl-L-alanyl-D-isoglutamine(in) + 2 H(+)(in). It carries out the reaction N(alpha)-formyl-L-methionyl-L-leucyl-L-phenylalanine(out) + 2 H(+)(out) = N(alpha)-formyl-L-methionyl-L-leucyl-L-phenylalanine(in) + 2 H(+)(in). Electrogenic proton-coupled amino-acid transporter that transports oligopeptides of 2 to 4 amino acids with a preference for dipeptides. Transports neutral and monovalently charged peptides with a proton to peptide stoichiometry of 1:1 or 2:1. Primarily responsible for the absorption of dietary di- and tripeptides from the small intestinal lumen. Mediates transepithelial transport of muramyl and N-formylated bacterial dipeptides contributing to recognition of pathogenic bacteria by the mucosal immune system. This is Solute carrier family 15 member 1 (Slc15a1) from Rattus norvegicus (Rat).